A 226-amino-acid chain; its full sequence is 3-dehydroquinate dehydratase (226 aa).

Residues Ser-21, 42–44, and Arg-70 each bind 3-dehydroquinate; that span reads EVR. His-124 serves as the catalytic Proton donor/acceptor. Lys-149 acts as the Schiff-base intermediate with substrate in catalysis. 3-dehydroquinate contacts are provided by Arg-187, Thr-206, and Gln-210.

The protein belongs to the type-I 3-dehydroquinase family. In terms of assembly, homodimer.

The catalysed reaction is 3-dehydroquinate = 3-dehydroshikimate + H2O. It participates in metabolic intermediate biosynthesis; chorismate biosynthesis; chorismate from D-erythrose 4-phosphate and phosphoenolpyruvate: step 3/7. Involved in the third step of the chorismate pathway, which leads to the biosynthesis of aromatic amino acids. Catalyzes the cis-dehydration of 3-dehydroquinate (DHQ) and introduces the first double bond of the aromatic ring to yield 3-dehydroshikimate. The polypeptide is 3-dehydroquinate dehydratase (Methanothrix thermoacetophila (strain DSM 6194 / JCM 14653 / NBRC 101360 / PT) (Methanosaeta thermophila)).